The following is a 147-amino-acid chain: Large ribosomal subunit protein uL13 (147 aa).

This sequence belongs to the universal ribosomal protein uL13 family. In terms of assembly, part of the 50S ribosomal subunit.

In terms of biological role, this protein is one of the early assembly proteins of the 50S ribosomal subunit, although it is not seen to bind rRNA by itself. It is important during the early stages of 50S assembly. The sequence is that of Large ribosomal subunit protein uL13 from Arthrobacter sp. (strain FB24).